Here is a 145-residue protein sequence, read N- to C-terminus: Nucleoside diphosphate kinase (145 aa).

Positions 11, 59, 87, 93, 104, and 114 each coordinate ATP. Histidine 117 serves as the catalytic Pros-phosphohistidine intermediate.

It belongs to the NDK family. In terms of assembly, homotetramer. Mg(2+) is required as a cofactor.

It is found in the cytoplasm. The enzyme catalyses a 2'-deoxyribonucleoside 5'-diphosphate + ATP = a 2'-deoxyribonucleoside 5'-triphosphate + ADP. It catalyses the reaction a ribonucleoside 5'-diphosphate + ATP = a ribonucleoside 5'-triphosphate + ADP. In terms of biological role, major role in the synthesis of nucleoside triphosphates other than ATP. The ATP gamma phosphate is transferred to the NDP beta phosphate via a ping-pong mechanism, using a phosphorylated active-site intermediate. This is Nucleoside diphosphate kinase from Myxococcus xanthus.